Reading from the N-terminus, the 305-residue chain is Nuclear egress protein 1 (305 aa).

Basic and acidic residues predominate over residues 1–11 (MDRERPRKTRE). A disordered region spans residues 1 to 24 (MDRERPRKTREPASPGSVLSKRSK). A CCCH-type zinc finger spans residues 104-230 (CLVLSPLGHA…FALFKTDDLH (127 aa)).

It belongs to the herpesviridae NEC1 protein family. As to quaternary structure, forms a heterohexameric complex with NEC2. Interacts with capsid vertex specific component 2/CVC2; this interaction directs the capsid to the host inner nuclear membrane to initiate budding. Phosphorylated at serine residues in the N-terminus. This phosphorylation regulates the localization within the inner nuclear membrane.

The protein resides in the host nucleus inner membrane. Plays an essential role in virion nuclear egress, the first step of virion release from infected cell. Within the host nucleus, NEC1 interacts with the newly formed capsid through the vertexes and directs it to the inner nuclear membrane by associating with NEC2. Induces the budding of the capsid at the inner nuclear membrane as well as its envelopment into the perinuclear space. There, the NEC1/NEC2 complex promotes the fusion of the enveloped capsid with the outer nuclear membrane and the subsequent release of the viral capsid into the cytoplasm where it will reach the secondary budding sites in the host Golgi or trans-Golgi network. The chain is Nuclear egress protein 1 from Equus caballus (Horse).